A 72-amino-acid chain; its full sequence is Translation initiation factor IF-1 (72 aa).

Residues 1 to 72 enclose the S1-like domain; it reads MTKEENIEMQ…SKGRIIFRSR (72 aa).

This sequence belongs to the IF-1 family. As to quaternary structure, component of the 30S ribosomal translation pre-initiation complex which assembles on the 30S ribosome in the order IF-2 and IF-3, IF-1 and N-formylmethionyl-tRNA(fMet); mRNA recruitment can occur at any time during PIC assembly.

It is found in the cytoplasm. One of the essential components for the initiation of protein synthesis. Stabilizes the binding of IF-2 and IF-3 on the 30S subunit to which N-formylmethionyl-tRNA(fMet) subsequently binds. Helps modulate mRNA selection, yielding the 30S pre-initiation complex (PIC). Upon addition of the 50S ribosomal subunit IF-1, IF-2 and IF-3 are released leaving the mature 70S translation initiation complex. The protein is Translation initiation factor IF-1 of Wigglesworthia glossinidia brevipalpis.